Reading from the N-terminus, the 102-residue chain is uncharacterized protein (102 aa).

Helical transmembrane passes span 21 to 43 (FSSS…TPVF) and 58 to 80 (SFAV…YFFC).

It localises to the membrane. This is an uncharacterized protein from Saccharomyces cerevisiae (strain ATCC 204508 / S288c) (Baker's yeast).